Here is an 89-residue protein sequence, read N- to C-terminus: Small ribosomal subunit protein uS14 (89 aa).

The protein belongs to the universal ribosomal protein uS14 family. As to quaternary structure, part of the 30S ribosomal subunit. Contacts proteins S3 and S10.

Its function is as follows. Binds 16S rRNA, required for the assembly of 30S particles and may also be responsible for determining the conformation of the 16S rRNA at the A site. This is Small ribosomal subunit protein uS14 from Acholeplasma laidlawii (strain PG-8A).